We begin with the raw amino-acid sequence, 346 residues long: Tetraacyldisaccharide 4'-kinase (346 aa).

Thr54–Thr61 contacts ATP.

It belongs to the LpxK family.

The enzyme catalyses a lipid A disaccharide + ATP = a lipid IVA + ADP + H(+). It participates in glycolipid biosynthesis; lipid IV(A) biosynthesis; lipid IV(A) from (3R)-3-hydroxytetradecanoyl-[acyl-carrier-protein] and UDP-N-acetyl-alpha-D-glucosamine: step 6/6. Functionally, transfers the gamma-phosphate of ATP to the 4'-position of a tetraacyldisaccharide 1-phosphate intermediate (termed DS-1-P) to form tetraacyldisaccharide 1,4'-bis-phosphate (lipid IVA). The polypeptide is Tetraacyldisaccharide 4'-kinase (Sinorhizobium fredii (strain NBRC 101917 / NGR234)).